Here is a 288-residue protein sequence, read N- to C-terminus: Bifunctional protein FolD (288 aa).

Residues 166 to 168 (GAS) and Ile-232 contribute to the NADP(+) site.

It belongs to the tetrahydrofolate dehydrogenase/cyclohydrolase family. In terms of assembly, homodimer.

The catalysed reaction is (6R)-5,10-methylene-5,6,7,8-tetrahydrofolate + NADP(+) = (6R)-5,10-methenyltetrahydrofolate + NADPH. It catalyses the reaction (6R)-5,10-methenyltetrahydrofolate + H2O = (6R)-10-formyltetrahydrofolate + H(+). It functions in the pathway one-carbon metabolism; tetrahydrofolate interconversion. Catalyzes the oxidation of 5,10-methylenetetrahydrofolate to 5,10-methenyltetrahydrofolate and then the hydrolysis of 5,10-methenyltetrahydrofolate to 10-formyltetrahydrofolate. This Escherichia coli (strain UTI89 / UPEC) protein is Bifunctional protein FolD.